Here is a 137-residue protein sequence, read N- to C-terminus: ATP synthase epsilon chain (137 aa).

This sequence belongs to the ATPase epsilon chain family. As to quaternary structure, F-type ATPases have 2 components, CF(1) - the catalytic core - and CF(0) - the membrane proton channel. CF(1) has five subunits: alpha(3), beta(3), gamma(1), delta(1), epsilon(1). CF(0) has three main subunits: a, b and c.

It is found in the cell membrane. Its function is as follows. Produces ATP from ADP in the presence of a proton gradient across the membrane. This is ATP synthase epsilon chain from Streptococcus agalactiae serotype III (strain NEM316).